Consider the following 227-residue polypeptide: MSERRQDYKRHGSRYKARMRAVDILFEAESRDVDPVAIIDDRHKLARDTNPIVAPVAEYTETIINGVAVELDTLDVFLAEHIAETWTLGRLPSVDRAILRVASWEMIYNADVPVTTAIVEAVEIASEYSGDKSSAYINATLDAMASKVETLRERAANPEAVLAEASESLDDAPVAPWDDSDALDDSDEDFEAVDAAEVFEAEETVEVSEVAEDSEVSKVSEEKADES.

2 disordered regions span residues 165-189 and 201-227; these read ASES…SDED and AEET…ADES. 2 stretches are compositionally biased toward acidic residues: residues 178 to 189 and 201 to 214; these read DDSDALDDSDED and AEET…AEDS. Basic and acidic residues predominate over residues 215-227; it reads EVSKVSEEKADES.

This sequence belongs to the NusB family.

Involved in transcription antitermination. Required for transcription of ribosomal RNA (rRNA) genes. Binds specifically to the boxA antiterminator sequence of the ribosomal RNA (rrn) operons. This Corynebacterium glutamicum (strain ATCC 13032 / DSM 20300 / JCM 1318 / BCRC 11384 / CCUG 27702 / LMG 3730 / NBRC 12168 / NCIMB 10025 / NRRL B-2784 / 534) protein is Transcription antitermination protein NusB.